Consider the following 370-residue polypeptide: Aminomethyltransferase (370 aa).

This sequence belongs to the GcvT family. As to quaternary structure, the glycine cleavage system is composed of four proteins: P, T, L and H.

It carries out the reaction N(6)-[(R)-S(8)-aminomethyldihydrolipoyl]-L-lysyl-[protein] + (6S)-5,6,7,8-tetrahydrofolate = N(6)-[(R)-dihydrolipoyl]-L-lysyl-[protein] + (6R)-5,10-methylene-5,6,7,8-tetrahydrofolate + NH4(+). Functionally, the glycine cleavage system catalyzes the degradation of glycine. This Stenotrophomonas maltophilia (strain K279a) protein is Aminomethyltransferase.